A 420-amino-acid chain; its full sequence is D-tagatose-1,6-bisphosphate aldolase subunit GatZ (420 aa).

This sequence belongs to the GatZ/KbaZ family. GatZ subfamily. In terms of assembly, forms a complex with GatY.

The protein operates within carbohydrate metabolism; D-tagatose 6-phosphate degradation; D-glyceraldehyde 3-phosphate and glycerone phosphate from D-tagatose 6-phosphate: step 2/2. Functionally, component of the tagatose-1,6-bisphosphate aldolase GatYZ that is required for full activity and stability of the Y subunit. Could have a chaperone-like function for the proper and stable folding of GatY. When expressed alone, GatZ does not show any aldolase activity. Is involved in the catabolism of galactitol. This is D-tagatose-1,6-bisphosphate aldolase subunit GatZ from Escherichia coli O45:K1 (strain S88 / ExPEC).